Consider the following 86-residue polypeptide: MEFKIMSTTDKIEQKVIEMVAEKLNKDKAIITTDSRFIEDLKADSLDTVELMMAIEVEYGIDIPDDEATKIKTVSDVIKYIKERQS.

The 76-residue stretch at D10–Q85 folds into the Carrier domain. S45 is subject to O-(pantetheine 4'-phosphoryl)serine.

It belongs to the acyl carrier protein (ACP) family. 4'-phosphopantetheine is transferred from CoA to a specific serine of apo-ACP by AcpS. This modification is essential for activity because fatty acids are bound in thioester linkage to the sulfhydryl of the prosthetic group.

It localises to the cytoplasm. The protein operates within lipid metabolism; fatty acid biosynthesis. Carrier of the growing fatty acid chain in fatty acid biosynthesis. The sequence is that of Acyl carrier protein from Rickettsia prowazekii (strain Madrid E).